The primary structure comprises 155 residues: Conopressin/neurophysin (155 aa).

A signal peptide spans 1 to 26 (MMSSLCGMPLTYLLTAAVLSLSLTDA). Cysteines 27 and 32 form a disulfide. The residue at position 35 (glycine 35) is a Glycine amide. Intrachain disulfides connect cysteine 50–cysteine 94, cysteine 53–cysteine 67, cysteine 61–cysteine 84, cysteine 68–cysteine 74, cysteine 101–cysteine 115, cysteine 109–cysteine 127, and cysteine 116–cysteine 121. Asparagine 88 is a glycosylation site (N-linked (GlcNAc...) asparagine).

This sequence belongs to the vasopressin/oxytocin family. Post-translationally, seven disulfide bonds are present in neurophysin.

The protein localises to the secreted. The chain is Conopressin/neurophysin from Lymnaea stagnalis (Great pond snail).